The sequence spans 780 residues: ATPase family gene 2 protein (780 aa).

Low complexity predominate over residues 1 to 23 (MAPKSSSSGSKKKSSASSNSADA). Residues 1–26 (MAPKSSSSGSKKKSSASSNSADAKAS) form a disordered region. Residues 286–293 (GPPGTGKT) and 557–564 (GPPGCSKT) contribute to the ATP site.

This sequence belongs to the AAA ATPase family. AFG2 subfamily. In terms of assembly, homohexamer; ATP binding induces oligomerization. Forms a ring-shaped particle of about 12 nm diameter, that displays 6-fold radial symmetry. Associates with cytoplasmic pre-60S ribosomal particles containing ARX1, ALB1, RLP24 and NOG1. Binds to pre-60S ribosomal particles soon after their export from the nucleus and is released before REI1 and LSG1 are incorporated into the particles. Hexameric form interacts with RLP24 (via C-terminal); the interaction recruits AFG2 to pre-60S ribosomal particles and promotes AFG2 ATPase activity and RLP24 release from pre-60S ribosomal particles. Interacts (via N-terminus) with nucleoporin NUP116 (via N-terminus); the interaction is required for RLP24 release from pre-60S ribosomal particles.

Its subcellular location is the cytoplasm. The enzyme catalyses ATP + H2O = ADP + phosphate + H(+). Its activity is regulated as follows. The hexamer is activated by RLP24 during pre-60S ribosomal particle maturation; RLP24 activates ATPase activity of both ATP-binding regions and increases cooperativity between AFG2 subunits. The second ATP-binding region is inhibited by diazaborine; the inhibition requires prior ATP binding specifically to the second ATP-binding region. In terms of biological role, ATP-dependent chaperone which uses the energy provided by ATP hydrolysis to generate mechanical force to disassemble protein complexes. Plays an essential role in the cytoplasmic maturation steps of pre-60S ribosomal particles by promoting the release of shuttling protein RLP24 from the pre-ribosomal particles. This step facilitates the subsequent release of other shuttling proteins such as NOG1 and allows the transition of the pre-ribosomal particles to later maturation forms that bind REI1. Essential for viability. The polypeptide is ATPase family gene 2 protein (Saccharomyces cerevisiae (strain ATCC 204508 / S288c) (Baker's yeast)).